We begin with the raw amino-acid sequence, 330 residues long: Cytoskeleton protein RodZ (330 aa).

The Cytoplasmic portion of the chain corresponds to 1–111 (MNTEATQDHQ…LGKRRKKRDG (111 aa)). In terms of domain architecture, HTH cro/C1-type spans 19–71 (LRHAREQLGLSQQAVAERLCLKVSTVRDIEDDKAPADLASTFLRGYIRSYARL). The segment at residues 30–49 (QQAVAERLCLKVSTVRDIED) is a DNA-binding region (H-T-H motif). The helical; Signal-anchor for type II membrane protein transmembrane segment at 112 to 132 (WLMSFTWLVLFVVIGLSGAWW) threads the bilayer. The Periplasmic portion of the chain corresponds to 133-330 (WQDHKAQQEE…TLNAEQSPAQ (198 aa)). Residues 146-166 (MADQSSAELNGGDANSQNVPL) show a composition bias toward polar residues. The segment at 146-237 (MADQSSAELN…ASPLPTDQAN (92 aa)) is disordered. Low complexity-rich tracts occupy residues 176–202 (TDSAANSAPTDTASTPTTSAPAQTPAD) and 216–233 (TAGTAPTTPATPASPLPT).

Belongs to the RodZ family.

The protein localises to the cell inner membrane. Functionally, cytoskeletal protein that is involved in cell-shape control through regulation of the length of the long axis. This is Cytoskeleton protein RodZ from Klebsiella pneumoniae (strain 342).